Consider the following 502-residue polypeptide: Protein ANKUB1 (502 aa).

The chain is Protein ANKUB1 (ANKUB1) from Homo sapiens (Human).